The sequence spans 1227 residues: Protein transport protein Sec31A (1227 aa).

WD repeat units lie at residues 4-47, 64-111, 120-160, 166-206, 209-254, 258-298, and 301-342; these read KEID…EIFE, SSAH…AGDT, KHTG…TPMT, QPLE…PIIK, DHNN…SPLR, SHTR…VLYE, and TNMQ…DGLR. One copy of the WD 8; interaction with SEC13 repeat lies at 397–430; the sequence is SFSFGGKLVTFENAKPQQQPGIDQQPQHHYVYVS. Disordered stretches follow at residues 804-875, 905-1008, and 1040-1075; these read EAIK…YSQA, QPVA…GWND, and ADPQAQMQQPPAAPVGTPSFQPQQLSTGQQAPLGPY. Residues 905–924 are compositionally biased toward low complexity; sequence QPVAAPASASYPSPASNTNP. A compositionally biased stretch (pro residues) spans 925–945; it reads PYLPAAQPVPSPLYPGQPQPS. The span at 995-1006 shows a compositional bias: polar residues; it reads PASQRTGPQNGW. Low complexity predominate over residues 1040–1049; that stretch reads ADPQAQMQQP. Over residues 1057-1069 the composition is skewed to polar residues; that stretch reads PSFQPQQLSTGQQ.

This sequence belongs to the WD repeat SEC31 family. COPII is composed of at least 5 proteins: the SEC23/24 complex, the SEC13/31 complex and SAR1. SEC13 and SEC31 make a 2:2 tetramer that forms the edge element of the COPII outer coat. The tetramer self-assembles in multiple copies to form the complete polyhedral cage. Interacts (via WD 8) with SEC13.

It localises to the cytoplasm. The protein localises to the cytoplasmic vesicle. The protein resides in the COPII-coated vesicle membrane. Its subcellular location is the endoplasmic reticulum membrane. In terms of biological role, component of the coat protein complex II (COPII) which promotes the formation of transport vesicles from the endoplasmic reticulum (ER). The coat has two main functions, the physical deformation of the endoplasmic reticulum membrane into vesicles and the selection of cargo molecules. The sequence is that of Protein transport protein Sec31A (SEC31A) from Gallus gallus (Chicken).